The chain runs to 172 residues: SsrA-binding protein (172 aa).

The protein belongs to the SmpB family.

The protein localises to the cytoplasm. In terms of biological role, required for rescue of stalled ribosomes mediated by trans-translation. Binds to transfer-messenger RNA (tmRNA), required for stable association of tmRNA with ribosomes. tmRNA and SmpB together mimic tRNA shape, replacing the anticodon stem-loop with SmpB. tmRNA is encoded by the ssrA gene; the 2 termini fold to resemble tRNA(Ala) and it encodes a 'tag peptide', a short internal open reading frame. During trans-translation Ala-aminoacylated tmRNA acts like a tRNA, entering the A-site of stalled ribosomes, displacing the stalled mRNA. The ribosome then switches to translate the ORF on the tmRNA; the nascent peptide is terminated with the 'tag peptide' encoded by the tmRNA and targeted for degradation. The ribosome is freed to recommence translation, which seems to be the essential function of trans-translation. The sequence is that of SsrA-binding protein from Dehalococcoides mccartyi (strain ATCC BAA-2100 / JCM 16839 / KCTC 5957 / BAV1).